The chain runs to 456 residues: Cysteine--tRNA ligase (456 aa).

Cys28 lines the Zn(2+) pocket. The short motif at 30-40 (ITVYDHCHLGH) is the 'HIGH' region element. Zn(2+) is bound by residues Cys209, His234, and Glu238. The 'KMSKS' region signature appears at 266 to 270 (KMAKS). Residue Lys269 participates in ATP binding.

The protein belongs to the class-I aminoacyl-tRNA synthetase family. Monomer. Zn(2+) serves as cofactor.

It is found in the cytoplasm. The catalysed reaction is tRNA(Cys) + L-cysteine + ATP = L-cysteinyl-tRNA(Cys) + AMP + diphosphate. In Legionella pneumophila subsp. pneumophila (strain Philadelphia 1 / ATCC 33152 / DSM 7513), this protein is Cysteine--tRNA ligase.